Here is a 2568-residue protein sequence, read N- to C-terminus: Highly reducing polyketide synthase AN6791 (2568 aa).

The 435-residue stretch at 11–445 (AEPIAIVGLS…GTNAHLIVES (435 aa)) folds into the Ketosynthase family 3 (KS3) domain. Residues Cys-200, His-326, and His-366 each act as for beta-ketoacyl synthase activity in the active site. A Malonyl-CoA:ACP transacylase (MAT) domain is found at 558–882 (VFTGQGAQWY…GSLVREVSAV (325 aa)). Residues 949–1087 (HDLLGSLVLG…GLITMEPEDA (139 aa)) are N-terminal hotdog fold. In terms of domain architecture, PKS/mFAS DH spans 949 to 1258 (HDLLGSLVLG…FQSVGRSAAP (310 aa)). His-981 acts as the Proton acceptor; for dehydratase activity in catalysis. A C-terminal hotdog fold region spans residues 1104–1258 (TRRFGPSDLY…FQSVGRSAAP (155 aa)). Asp-1169 serves as the catalytic Proton donor; for dehydratase activity. Residues 1311 to 1620 (RACLYFIYDA…EVRDCESDEW (310 aa)) form a methyltransferase (CMet) domain region. Residues 1857-2174 (GLLDTIAFDD…VGKHSGKVVL (318 aa)) form the Enoyl reductase (ER) domain. The Ketoreductase (KR) domain occupies 2197–2375 (ASYLLVGGAG…AVSMDLGPVK (179 aa)). The Carrier domain maps to 2481 to 2558 (QAEKLVVEAI…ALASEVTRKS (78 aa)). At Ser-2518 the chain carries O-(pantetheine 4'-phosphoryl)serine.

Pantetheine 4'-phosphate serves as cofactor.

The protein operates within secondary metabolite biosynthesis. Its function is as follows. Highly reducing polyketide synthase; part of a cluster that mediates the biosynthesis of a yet undetermined secondary metabolite. With esterase AN6793, produces a pathway intermediate compound with molecular weight 258. The protein is Highly reducing polyketide synthase AN6791 of Emericella nidulans (strain FGSC A4 / ATCC 38163 / CBS 112.46 / NRRL 194 / M139) (Aspergillus nidulans).